Consider the following 430-residue polypeptide: MAATTNSFLVGSNNTQIPALKPKSSSQSFLHLSKPNTVNFVSKTKPVAVRCVASTTQVQDGVRSGSVGSQERVFNFAAGPATLPENVLLKAQADLYNWRGSGMSVMEMSHRGKEFLSIIQKAESDLRQLLEIPQEYSVLFLQGGATTQFAALPLNLCKSDDTVDFVVTGSWGDKAVKEAKKYCKTNVIWSGKSEKYTKVPSFEELEQTPDAKYLHICANETIHGVEFKDYPVPKNGFLVADMSSNFCSKPVDVSKFGVIYGGAQKNVGPSGVTIVIIRKDLIGNAQDITPVMLDYKIHDENSSLYNTPPCFGIYMCGLVFEDLLEQGGLKEVEKKNQRKADLLYNAIEESNGFFRCPVEKSVRSLMNVPFTLEKSELEAEFIKEAAKEKMVQLKGHRSVGGMRASIYNAMPLAGVEKLVAFMKDFQAKHA.

The transit peptide at 1–51 directs the protein to the chloroplast; sequence MAATTNSFLVGSNNTQIPALKPKSSSQSFLHLSKPNTVNFVSKTKPVAVRC. Valine 52 bears the N-acetylvaline mark. Arginine 111 is an L-glutamate binding site. Pyridoxal 5'-phosphate contacts are provided by residues 145 to 146, tryptophan 171, threonine 221, aspartate 241, and glutamine 264; that span reads AT. Lysine 265 carries the post-translational modification N6-(pyridoxal phosphate)lysine. 306 to 307 serves as a coordination point for pyridoxal 5'-phosphate; it reads NT.

This sequence belongs to the class-V pyridoxal-phosphate-dependent aminotransferase family. SerC subfamily. As to quaternary structure, homodimer. The cofactor is pyridoxal 5'-phosphate. Ubiquitous, but expressed preferentially in light-grown roots and shoots. Detected in root meristems and in root tissues surrounding the vascular bundle.

The protein resides in the plastid. It localises to the chloroplast. The catalysed reaction is O-phospho-L-serine + 2-oxoglutarate = 3-phosphooxypyruvate + L-glutamate. It carries out the reaction 4-(phosphooxy)-L-threonine + 2-oxoglutarate = (R)-3-hydroxy-2-oxo-4-phosphooxybutanoate + L-glutamate. It functions in the pathway amino-acid biosynthesis; L-serine biosynthesis; L-serine from 3-phospho-D-glycerate: step 2/3. The protein operates within cofactor biosynthesis; pyridoxine 5'-phosphate biosynthesis; pyridoxine 5'-phosphate from D-erythrose 4-phosphate: step 3/5. Its activity is regulated as follows. Inhibited by high concentration of cysteine and by 3-phosphonooxypyruvate. Not inhibited by serine, threonine, valine, glycine, tryptophan and O-acetyl-L-serine. Functionally, involved in the plastidial phosphorylated pathway of serine biosynthesis (PPSB). Catalyzes the reversible conversion of 3-phosphohydroxypyruvate to phosphoserine. This Arabidopsis thaliana (Mouse-ear cress) protein is Phosphoserine aminotransferase 1, chloroplastic.